The following is a 209-amino-acid chain: A-type ATP synthase subunit D (209 aa).

The protein belongs to the V-ATPase D subunit family. In terms of assembly, has multiple subunits with at least A(3), B(3), C, D, E, F, H, I and proteolipid K(x).

It is found in the cell membrane. Component of the A-type ATP synthase that produces ATP from ADP in the presence of a proton gradient across the membrane. This chain is A-type ATP synthase subunit D, found in Sulfolobus acidocaldarius (strain ATCC 33909 / DSM 639 / JCM 8929 / NBRC 15157 / NCIMB 11770).